The following is a 332-amino-acid chain: Glycerol-3-phosphate dehydrogenase [NAD(P)+] (332 aa).

NADPH is bound by residues serine 15, tryptophan 16, and lysine 110. Positions 110, 137, and 139 each coordinate sn-glycerol 3-phosphate. Residue alanine 141 coordinates NADPH. Lysine 192, aspartate 245, serine 255, arginine 256, and asparagine 257 together coordinate sn-glycerol 3-phosphate. Residue lysine 192 is the Proton acceptor of the active site. Residue arginine 256 participates in NADPH binding. Residue glutamate 282 coordinates NADPH.

It belongs to the NAD-dependent glycerol-3-phosphate dehydrogenase family.

It is found in the cytoplasm. The catalysed reaction is sn-glycerol 3-phosphate + NAD(+) = dihydroxyacetone phosphate + NADH + H(+). It catalyses the reaction sn-glycerol 3-phosphate + NADP(+) = dihydroxyacetone phosphate + NADPH + H(+). The protein operates within membrane lipid metabolism; glycerophospholipid metabolism. Its function is as follows. Catalyzes the reduction of the glycolytic intermediate dihydroxyacetone phosphate (DHAP) to sn-glycerol 3-phosphate (G3P), the key precursor for phospholipid synthesis. The protein is Glycerol-3-phosphate dehydrogenase [NAD(P)+] of Coxiella burnetii (strain CbuG_Q212) (Coxiella burnetii (strain Q212)).